A 278-amino-acid chain; its full sequence is HTH-type transcriptional regulator ExsA (278 aa).

The HTH araC/xylS-type domain maps to 171–269 (ERLQLFMEKH…GCTPSRSRQG (99 aa)). 2 DNA-binding regions (H-T-H motif) span residues 188–209 (SDFSREFGMGLTTFKELFGSVY) and 236–259 (IVDIAMEAGFSSQSYFTQSYRRRF).

As to quaternary structure, homodimer. Interacts with ExsD; this interaction inhibits ExsA activity.

With respect to regulation, in the absence of inducing signals such as low Ca(2+) or host cell contact, the T3SS/injectisome is expressed at a low basal level and exists in a quiescent state due to ExsA sequestration by ExsD in a 1:1 complex. Upon host cell contact, this interaction is disrupted by the anti-antiactivator protein ExsC leading to ExsA activation. In terms of biological role, transcriptional regulator that plays an essential role in the activation the type III secretion system (T3SS) operons. In addition, ExsA directly regulates the transcription of ImpA virulence factor that cooperatively inhibits the functions of host macrophages together with the T3SS. This Pseudomonas aeruginosa (strain ATCC 15692 / DSM 22644 / CIP 104116 / JCM 14847 / LMG 12228 / 1C / PRS 101 / PAO1) protein is HTH-type transcriptional regulator ExsA (exsA).